The chain runs to 139 residues: Protein Turandot B (139 aa).

Positions 1–21 are cleaved as a signal peptide; it reads MNFNMSMICFALLLIVTLCSA.

Belongs to the Turandot family.

It is found in the secreted. A humoral factor that may play a role in stress tolerance. This Drosophila yakuba (Fruit fly) protein is Protein Turandot B.